The following is a 282-amino-acid chain: 2-dehydro-3-deoxyphosphooctonate aldolase (282 aa).

Belongs to the KdsA family.

It is found in the cytoplasm. The catalysed reaction is D-arabinose 5-phosphate + phosphoenolpyruvate + H2O = 3-deoxy-alpha-D-manno-2-octulosonate-8-phosphate + phosphate. It functions in the pathway carbohydrate biosynthesis; 3-deoxy-D-manno-octulosonate biosynthesis; 3-deoxy-D-manno-octulosonate from D-ribulose 5-phosphate: step 2/3. Its pathway is bacterial outer membrane biogenesis; lipopolysaccharide biosynthesis. In Agrobacterium fabrum (strain C58 / ATCC 33970) (Agrobacterium tumefaciens (strain C58)), this protein is 2-dehydro-3-deoxyphosphooctonate aldolase.